Here is a 308-residue protein sequence, read N- to C-terminus: Methionyl-tRNA formyltransferase (308 aa).

Residue 109-112 participates in (6S)-5,6,7,8-tetrahydrofolate binding; the sequence is SLLP.

Belongs to the Fmt family.

The enzyme catalyses L-methionyl-tRNA(fMet) + (6R)-10-formyltetrahydrofolate = N-formyl-L-methionyl-tRNA(fMet) + (6S)-5,6,7,8-tetrahydrofolate + H(+). Functionally, attaches a formyl group to the free amino group of methionyl-tRNA(fMet). The formyl group appears to play a dual role in the initiator identity of N-formylmethionyl-tRNA by promoting its recognition by IF2 and preventing the misappropriation of this tRNA by the elongation apparatus. This Salinispora tropica (strain ATCC BAA-916 / DSM 44818 / JCM 13857 / NBRC 105044 / CNB-440) protein is Methionyl-tRNA formyltransferase.